Here is a 215-residue protein sequence, read N- to C-terminus: Deoxyribose-phosphate aldolase (215 aa).

Asp-89 acts as the Proton donor/acceptor in catalysis. Residue Lys-153 is the Schiff-base intermediate with acetaldehyde of the active site. Lys-182 (proton donor/acceptor) is an active-site residue.

The protein belongs to the DeoC/FbaB aldolase family. DeoC type 1 subfamily.

The protein resides in the cytoplasm. The catalysed reaction is 2-deoxy-D-ribose 5-phosphate = D-glyceraldehyde 3-phosphate + acetaldehyde. It participates in carbohydrate degradation; 2-deoxy-D-ribose 1-phosphate degradation; D-glyceraldehyde 3-phosphate and acetaldehyde from 2-deoxy-alpha-D-ribose 1-phosphate: step 2/2. Its function is as follows. Catalyzes a reversible aldol reaction between acetaldehyde and D-glyceraldehyde 3-phosphate to generate 2-deoxy-D-ribose 5-phosphate. In Lactiplantibacillus plantarum (strain ATCC BAA-793 / NCIMB 8826 / WCFS1) (Lactobacillus plantarum), this protein is Deoxyribose-phosphate aldolase.